Here is a 108-residue protein sequence, read N- to C-terminus: Pumilarin (108 aa).

The propeptide occupies Met1–Asp38. The cyclopeptide (Leu-Trp) cross-link spans Leu39 to Trp108.

The cross-link permits a high resistance to proteolysis. Is more resistant to specific proteases than to unspecific proteases.

Its subcellular location is the secreted. In terms of biological role, cyclopeptide antibiotic that inhibits both Gram-positive and Gram-negative bacteria. Shows potent to weak activities against M.flavus (MIC=3 ug/ml), B.cereus (MIC=12 ug/ml), B.pumilus (MIC=12 ug/ml), E.coli (MIC=12 ug/ml), and S.pneumoniae (MIC=47 ug/ml). May act by forming pores. This chain is Pumilarin, found in Bacillus safensis.